The sequence spans 260 residues: DNA repair protein RecO (260 aa).

Belongs to the RecO family.

In terms of biological role, involved in DNA repair and RecF pathway recombination. This chain is DNA repair protein RecO, found in Ligilactobacillus salivarius (strain UCC118) (Lactobacillus salivarius).